We begin with the raw amino-acid sequence, 194 residues long: Peptidyl-tRNA hydrolase (194 aa).

A tRNA-binding site is contributed by Tyr-16. His-21 serves as the catalytic Proton acceptor. TRNA contacts are provided by Phe-67, Asn-69, and Asn-115.

Belongs to the PTH family. Monomer.

It localises to the cytoplasm. It carries out the reaction an N-acyl-L-alpha-aminoacyl-tRNA + H2O = an N-acyl-L-amino acid + a tRNA + H(+). Its function is as follows. Hydrolyzes ribosome-free peptidyl-tRNAs (with 1 or more amino acids incorporated), which drop off the ribosome during protein synthesis, or as a result of ribosome stalling. Functionally, catalyzes the release of premature peptidyl moieties from peptidyl-tRNA molecules trapped in stalled 50S ribosomal subunits, and thus maintains levels of free tRNAs and 50S ribosomes. This Salmonella agona (strain SL483) protein is Peptidyl-tRNA hydrolase.